We begin with the raw amino-acid sequence, 924 residues long: MDVLPTGGGRPGLRTELEFRGGGGEARLESQEEETIPAAPPAPRLRGAAERPRRSRDTWDGDEDTEPGEACGGRTSRTASLVSGLLNELYSCTEEEEAAGGGRGAEGRRRRRDSLDSSTEASGSDVVLGGRSGAGDSRVLQELQERPSQRHQMLYLRQKDANELKTILRELKYRIGIQSAKLLRHLKQKDRLLHKVQRNCDIVTACLQAVSQKRRVDTKLKFTLEPSLGQNGFQQWYDALKAVARLSTGIPKEWRRKVWLTLADHYLHSIAIDWDKTMRFTFNERSNPDDDSMGIQIVKDLHRTGCSSYCGQEAEQDRVVLKRVLLAYARWNKTVGYCQGFNILAALILEVMEGNEGDALKIMIYLIDKVLPESYFVNNLRALSVDMAVFRDLLRMKLPELSQHLDTLQRTANKESGGGYEPPLTNVFTMQWFLTLFATCLPNQTVLKIWDSVFFEGSEIILRVSLAIWAKLGEQIECCETADEFYSTMGRLTQEMLENDLLQSHELMQTVYSMAPFPFPQLAELREKYTYNITPFPATVKPTSVSGRHSKARDSDEENDPDDEDAVVNAVGCLGPFSGFLAPELQKYQKQIKEPNEEQSLRSNNIAELSPGAINSCRSEYHAAFNSMMMERMTTDINALKRQYSRIKKKQQQQVHQVYIRADKGPVTSILPSQVNSSPVINHLLLGKKMKMTNRAAKNAVIHIPGHTGGKISPVPYEDLKTKLNSPWRTHIRVHKKNMPRTKSHPGCGDTVGLIDEQNEASKTNGLGAAEAFPSGCTATAGREGSSPEGSTRRTIEGQSPEPVFGDADVDVSAVQAKLGALELNQRDAAAETELRVHPPCQRHCPEPPSAPEENKATSKAPQGSNSKTPIFSPFPSVKPLRKSATARNLGLYGPTERTPTVHFPQMSRSFSKPGGGNSGTKKR.

The span at 1–11 (MDVLPTGGGRP) shows a compositional bias: gly residues. Disordered regions lie at residues 1–76 (MDVL…GRTS) and 94–134 (EEEE…RSGA). The span at 47–59 (GAAERPRRSRDTW) shows a compositional bias: basic and acidic residues. Residues 249–457 (GIPKEWRRKV…KIWDSVFFEG (209 aa)) enclose the Rab-GAP TBC domain. Disordered regions lie at residues 541–564 (KPTSVSGRHSKARDSDEENDPDDE), 776–806 (GCTATAGREGSSPEGSTRRTIEGQSPEPVFG), and 838–924 (HPPC…TKKR). A compositionally biased stretch (acidic residues) spans 555-564 (SDEENDPDDE). Position 800 is a phosphoserine (Ser800). Positions 858-870 (TSKAPQGSNSKTP) are enriched in polar residues. The span at 914–924 (PGGGNSGTKKR) shows a compositional bias: gly residues.

Its subcellular location is the cell membrane. Its function is as follows. May act as a GTPase-activating protein for Rab family protein(s). The sequence is that of TBC1 domain family member 30 (TBC1D30) from Homo sapiens (Human).